Consider the following 240-residue polypeptide: E3 ubiquitin-protein ligase LubX (240 aa).

U-box domains are found at residues 30–103 and 125–198; these read TTPT…QTNY and EIPD…RKRE.

Post-translationally, ubiquitinated in the presence of host E1 ubiquitin-activating enzyme, E2 ubiquitin-conjugating enzyme and ubiquitin.

It is found in the secreted. It localises to the host cell. The catalysed reaction is S-ubiquitinyl-[E2 ubiquitin-conjugating enzyme]-L-cysteine + [acceptor protein]-L-lysine = [E2 ubiquitin-conjugating enzyme]-L-cysteine + N(6)-ubiquitinyl-[acceptor protein]-L-lysine.. In terms of biological role, effector proteins function to alter host cell physiology and promote bacterial survival in host tissues. This protein is an E3 ubiquitin ligase that interferes with host's ubiquitination pathway. This Legionella pneumophila (strain Paris) protein is E3 ubiquitin-protein ligase LubX (lubX).